Reading from the N-terminus, the 232-residue chain is Large ribosomal subunit protein uL1 (232 aa).

The protein belongs to the universal ribosomal protein uL1 family. In terms of assembly, part of the 50S ribosomal subunit.

Binds directly to 23S rRNA. The L1 stalk is quite mobile in the ribosome, and is involved in E site tRNA release. Its function is as follows. Protein L1 is also a translational repressor protein, it controls the translation of the L11 operon by binding to its mRNA. This Paraburkholderia phytofirmans (strain DSM 17436 / LMG 22146 / PsJN) (Burkholderia phytofirmans) protein is Large ribosomal subunit protein uL1.